A 125-amino-acid chain; its full sequence is Large ribosomal subunit protein bL17 (125 aa).

This sequence belongs to the bacterial ribosomal protein bL17 family. In terms of assembly, part of the 50S ribosomal subunit. Contacts protein L32.

The protein is Large ribosomal subunit protein bL17 of Acinetobacter baylyi (strain ATCC 33305 / BD413 / ADP1).